We begin with the raw amino-acid sequence, 283 residues long: MAQTLAQTKQISQSHTFDVSQSHHKTPNDTNSHSVIYSTQNLDLWYGENHALQNINLDIYENQITAIIGPSGCGKSTYIKTLNRMVELVPTVKTAGKILYRDQDIFDQKYSKEQLRTNVGMVFQQPNPFPKSIYDNITYGPKIHGIKNKKVLDEIVEKSLRGAAIWDELKDRLHTNAYSLSGGQQQRVCIARCLAIEPEVILMDEPTSALDPISTLRVEELVQELKEKYTIIMVTHNMQQAARVSDKTAFFLNGYVNEYDDTDKIFSNPSNKKTEDYISGRFG.

Positions 1-20 are enriched in polar residues; it reads MAQTLAQTKQISQSHTFDVS. The segment at 1-33 is disordered; the sequence is MAQTLAQTKQISQSHTFDVSQSHHKTPNDTNSH. An ABC transporter domain is found at 37 to 278; the sequence is YSTQNLDLWY…PSNKKTEDYI (242 aa). Residue 69-76 participates in ATP binding; the sequence is GPSGCGKS.

It belongs to the ABC transporter superfamily. Phosphate importer (TC 3.A.1.7) family. The complex is composed of two ATP-binding proteins (PstB), two transmembrane proteins (PstC and PstA) and a solute-binding protein (PstS).

Its subcellular location is the cell membrane. The enzyme catalyses phosphate(out) + ATP + H2O = ADP + 2 phosphate(in) + H(+). Part of the ABC transporter complex PstSACB involved in phosphate import. Responsible for energy coupling to the transport system. This is Phosphate import ATP-binding protein PstB from Staphylococcus aureus (strain bovine RF122 / ET3-1).